Reading from the N-terminus, the 902-residue chain is Protein translocase subunit SecA (902 aa).

ATP contacts are provided by residues Gln-87, Gly-105 to Thr-109, and Asp-512. Disordered stretches follow at residues Arg-565–Ser-584 and Val-840–Lys-902. Basic and acidic residues-rich tracts occupy residues Val-840–Ala-859 and Gln-873–Arg-882. 4 residues coordinate Zn(2+): Cys-886, Cys-888, Cys-897, and His-898. A compositionally biased stretch (basic residues) spans Lys-892–Lys-902.

Belongs to the SecA family. As to quaternary structure, monomer and homodimer. Part of the essential Sec protein translocation apparatus which comprises SecA, SecYEG and auxiliary proteins SecDF-YajC and YidC. Zn(2+) is required as a cofactor.

It is found in the cell inner membrane. Its subcellular location is the cytoplasm. The enzyme catalyses ATP + H2O + cellular proteinSide 1 = ADP + phosphate + cellular proteinSide 2.. Functionally, part of the Sec protein translocase complex. Interacts with the SecYEG preprotein conducting channel. Has a central role in coupling the hydrolysis of ATP to the transfer of proteins into and across the cell membrane, serving both as a receptor for the preprotein-SecB complex and as an ATP-driven molecular motor driving the stepwise translocation of polypeptide chains across the membrane. In Alteromonas mediterranea (strain DSM 17117 / CIP 110805 / LMG 28347 / Deep ecotype), this protein is Protein translocase subunit SecA.